A 383-amino-acid chain; its full sequence is MRYISLLGATGSIGEQTLDVIRQHPDKFKLKAMTFGRNVDKAIPIIEQFQPEFVGCLSEEAYHTLKGHSFEYDVKMAAGDEANIEAAIYDAVDVVVNALVGSVGLVPTLKAIEQKKTIALANKETLVTAGHIVKEYAKTYDVPLLPVDSEHSAIFQCLQGEQAKNIERLIVTASGGSFRDKKRTELEGVTVEEALNHPNWSMGAKITIDSATMMNKGLEVIEAHWLFDIPYEQIDVLLHKESIIHSMVEFHDKSVMAQLGTPDMRVPIQYALTYPDRAPLPEAKSLNLWEIGQLNFQKADFDRYRCLHFAYESGKIGGTMPAVLNAANEMAVDAFLKGKVTFLQIEELIEKALNRHHVISTPSLQDIHEVDKETRDFVQSILT.

NADPH is bound by residues T10, G11, S12, I13, G36, R37, N38, and N122. K123 lines the 1-deoxy-D-xylulose 5-phosphate pocket. Residue E124 participates in NADPH binding. Residue D148 coordinates Mn(2+). Positions 149, 150, 174, and 197 each coordinate 1-deoxy-D-xylulose 5-phosphate. A Mn(2+)-binding site is contributed by E150. G203 serves as a coordination point for NADPH. 1-deoxy-D-xylulose 5-phosphate is bound by residues S210, N215, K216, and E219. E219 is a Mn(2+) binding site.

It belongs to the DXR family. Mg(2+) is required as a cofactor. Requires Mn(2+) as cofactor.

The enzyme catalyses 2-C-methyl-D-erythritol 4-phosphate + NADP(+) = 1-deoxy-D-xylulose 5-phosphate + NADPH + H(+). It functions in the pathway isoprenoid biosynthesis; isopentenyl diphosphate biosynthesis via DXP pathway; isopentenyl diphosphate from 1-deoxy-D-xylulose 5-phosphate: step 1/6. Catalyzes the NADPH-dependent rearrangement and reduction of 1-deoxy-D-xylulose-5-phosphate (DXP) to 2-C-methyl-D-erythritol 4-phosphate (MEP). The polypeptide is 1-deoxy-D-xylulose 5-phosphate reductoisomerase (Bacillus pumilus (strain SAFR-032)).